We begin with the raw amino-acid sequence, 401 residues long: Argininosuccinate synthase (401 aa).

Position 9–17 (alanine 9–serine 17) interacts with ATP. Tyrosine 87 serves as a coordination point for L-citrulline. Glycine 117 provides a ligand contact to ATP. Threonine 119, asparagine 123, and aspartate 124 together coordinate L-aspartate. Asparagine 123 is a binding site for L-citrulline. Residues arginine 127, serine 176, serine 185, glutamate 261, and tyrosine 273 each contribute to the L-citrulline site.

It belongs to the argininosuccinate synthase family. Type 1 subfamily. Homotetramer.

Its subcellular location is the cytoplasm. It carries out the reaction L-citrulline + L-aspartate + ATP = 2-(N(omega)-L-arginino)succinate + AMP + diphosphate + H(+). It participates in amino-acid biosynthesis; L-arginine biosynthesis; L-arginine from L-ornithine and carbamoyl phosphate: step 2/3. In Prosthecochloris aestuarii (strain DSM 271 / SK 413), this protein is Argininosuccinate synthase.